The sequence spans 318 residues: NADH-quinone oxidoreductase subunit H 2 (318 aa).

Helical transmembrane passes span 4-24 (LLIA…AGVF), 77-97 (LAPA…AFAP), 106-126 (VGVL…VLGA), 146-166 (LAYE…AGSF), 179-199 (LWFI…GLAA), 214-234 (LVAG…FLGE), 238-258 (ILLV…GPIL), 262-282 (IWFG…RAAL), and 293-313 (FAWK…AWIA).

This sequence belongs to the complex I subunit 1 family. In terms of assembly, NDH-1 is composed of 14 different subunits. Subunits NuoA, H, J, K, L, M, N constitute the membrane sector of the complex.

Its subcellular location is the cell inner membrane. It catalyses the reaction a quinone + NADH + 5 H(+)(in) = a quinol + NAD(+) + 4 H(+)(out). NDH-1 shuttles electrons from NADH, via FMN and iron-sulfur (Fe-S) centers, to quinones in the respiratory chain. The immediate electron acceptor for the enzyme in this species is believed to be ubiquinone. Couples the redox reaction to proton translocation (for every two electrons transferred, four hydrogen ions are translocated across the cytoplasmic membrane), and thus conserves the redox energy in a proton gradient. This subunit may bind ubiquinone. In Cereibacter sphaeroides (strain ATCC 17023 / DSM 158 / JCM 6121 / CCUG 31486 / LMG 2827 / NBRC 12203 / NCIMB 8253 / ATH 2.4.1.) (Rhodobacter sphaeroides), this protein is NADH-quinone oxidoreductase subunit H 2.